We begin with the raw amino-acid sequence, 235 residues long: Ribosomal RNA small subunit methyltransferase G (235 aa).

Residues Gly74, Phe79, 97–99 (EAT), 125–126 (AE), and Arg144 contribute to the S-adenosyl-L-methionine site.

It belongs to the methyltransferase superfamily. RNA methyltransferase RsmG family.

Its subcellular location is the cytoplasm. Specifically methylates the N7 position of a guanine in 16S rRNA. This Dehalococcoides mccartyi (strain ATCC BAA-2100 / JCM 16839 / KCTC 5957 / BAV1) protein is Ribosomal RNA small subunit methyltransferase G.